Reading from the N-terminus, the 461-residue chain is Coronin-1A (461 aa).

The residue at position 2 (serine 2) is an N-acetylserine. At serine 2 the chain carries Phosphoserine; by PKC. WD repeat units lie at residues 13–63, 73–110, 123–160, 164–204, 207–251, 258–296, and 302–349; these read HVFG…LVLP, NVPLVCGHTAPVLDIAWCPHNDNVIASGSEDCTVMVWE, PVITLEGHTKRVGIVAWHPTAQNVLLSAGCDNVILVWD, GAAV…RVIE, KGTV…ALWD, PLSLQELDTSSGVLLPFFDPDTNIVYLCGKGDSSIRYFE, and PFLH…EPIA. Residues 403 to 418 are compositionally biased toward basic and acidic residues; that stretch reads ELRVNRGLDSARRRAT. A disordered region spans residues 403–434; sequence ELRVNRGLDSARRRATPEPSGTPSSDTVSRLE. At serine 412 the chain carries Phosphoserine; by PKC. Threonine 418 carries the post-translational modification Phosphothreonine. Positions 421-430 are enriched in polar residues; it reads PSGTPSSDTV. The residue at position 422 (serine 422) is a Phosphoserine. Residues 424–461 are a coiled coil; sequence TPSSDTVSRLEEDVRNLNAIVQKLQERLDRLEETVQAK.

It belongs to the WD repeat coronin family. In terms of assembly, binds actin. Post-translationally, phosphorylation at Ser-412 by PKC strongly down-regulates the association with actin. Polyubiquitinated by RNF128 with 'Lys-48'-linked chains, leading to proteasomal degradation. In terms of tissue distribution, expressed in spleen, lymph nodes, thymus, brain and at very lower levels in lung. Also expressed in cells of the lymphoid/myeloid lineage. Not expressed in Kuffper cells.

Its subcellular location is the cytoplasm. The protein localises to the cytoskeleton. It localises to the cell cortex. It is found in the cytoplasmic vesicle. The protein resides in the phagosome membrane. May be a crucial component of the cytoskeleton of highly motile cells, functioning both in the invagination of large pieces of plasma membrane, as well as in forming protrusions of the plasma membrane involved in cell locomotion. In mycobacteria-infected cells, its retention on the phagosomal membrane prevents fusion between phagosomes and lysosomes. This is Coronin-1A (Coro1a) from Mus musculus (Mouse).